Consider the following 308-residue polypeptide: Transaldolase (308 aa).

The active-site Schiff-base intermediate with substrate is K125.

It belongs to the transaldolase family. Type 1 subfamily. Homodimer.

The protein resides in the cytoplasm. The catalysed reaction is D-sedoheptulose 7-phosphate + D-glyceraldehyde 3-phosphate = D-erythrose 4-phosphate + beta-D-fructose 6-phosphate. It participates in carbohydrate degradation; pentose phosphate pathway; D-glyceraldehyde 3-phosphate and beta-D-fructose 6-phosphate from D-ribose 5-phosphate and D-xylulose 5-phosphate (non-oxidative stage): step 2/3. Transaldolase is important for the balance of metabolites in the pentose-phosphate pathway. The polypeptide is Transaldolase (Ectopseudomonas mendocina (strain ymp) (Pseudomonas mendocina)).